The sequence spans 272 residues: MNFLQKLEHAWATQNSLLQVGLDPDPARFPAELQGRPDAILSFCRGIVDATAPFASSFKPQIAYFAAHRAEDQLEALCGHIRDKYPHLPIVLDAKRGDIGSTAENYAREAFERYQAHAVTVSPYMGLDSVEPYLAWRDRGVIVLCRTSNPGGSDLQFLPMADGQPLYLHVAGLVADKWNAHGQCGLVVGATYPNELAAVRKRVGDSLPLLVPGIGAQGGDINATVQAGANSARAGMMINSSRAIIYASGGEDWREAAAEAARGLRDAINAVR.

Catalysis depends on Lys95, which acts as the Proton donor.

This sequence belongs to the OMP decarboxylase family. Type 2 subfamily.

The enzyme catalyses orotidine 5'-phosphate + H(+) = UMP + CO2. It participates in pyrimidine metabolism; UMP biosynthesis via de novo pathway; UMP from orotate: step 2/2. The protein is Orotidine 5'-phosphate decarboxylase of Bordetella avium (strain 197N).